The primary structure comprises 253 residues: ATP synthase subunit b 1 (253 aa).

A helical membrane pass occupies residues 5–27; it reads GWTVALQAVNFLILVLLLRHFLY.

This sequence belongs to the ATPase B chain family. As to quaternary structure, F-type ATPases have 2 components, F(1) - the catalytic core - and F(0) - the membrane proton channel. F(1) has five subunits: alpha(3), beta(3), gamma(1), delta(1), epsilon(1). F(0) has three main subunits: a(1), b(2) and c(10-14). The alpha and beta chains form an alternating ring which encloses part of the gamma chain. F(1) is attached to F(0) by a central stalk formed by the gamma and epsilon chains, while a peripheral stalk is formed by the delta and b chains.

It is found in the cell inner membrane. F(1)F(0) ATP synthase produces ATP from ADP in the presence of a proton or sodium gradient. F-type ATPases consist of two structural domains, F(1) containing the extramembraneous catalytic core and F(0) containing the membrane proton channel, linked together by a central stalk and a peripheral stalk. During catalysis, ATP synthesis in the catalytic domain of F(1) is coupled via a rotary mechanism of the central stalk subunits to proton translocation. Its function is as follows. Component of the F(0) channel, it forms part of the peripheral stalk, linking F(1) to F(0). The protein is ATP synthase subunit b 1 of Rhodospirillum centenum (strain ATCC 51521 / SW).